We begin with the raw amino-acid sequence, 209 residues long: MNIYTSPTRTPNIAPKSGQRPSLPMLATDERSTDKESPNEDREFVPCSSLDVRRIYPKGPLLVLPEKIYLYSEPTVKELLPFDVVINVAEEANDLRMQVPAVEYHHYRWEHDSQIALDLPSLTSIIHAATTKREKILIHCQCGLSRSATLIIAYIMKYHNLSLRHSYDLLKSRADKINPSIGLIFQLMEWEVALNAKTNVQANSYRKVP.

The span at 1–11 (MNIYTSPTRTP) shows a compositional bias: polar residues. The interval 1–43 (MNIYTSPTRTPNIAPKSGQRPSLPMLATDERSTDKESPNEDRE) is disordered. The span at 28–43 (TDERSTDKESPNEDRE) shows a compositional bias: basic and acidic residues. An intrachain disulfide couples Cys47 to Cys142. One can recognise a Tyrosine-protein phosphatase domain in the interval 59 to 196 (GPLLVLPEKI…LMEWEVALNA (138 aa)). His111 contributes to the 4-O-phospho-L-tyrosine binding site. The Phosphocysteine intermediate role is filled by Cys140.

The protein belongs to the protein-tyrosine phosphatase family. Non-receptor class dual specificity subfamily.

The enzyme catalyses O-phospho-L-tyrosyl-[protein] + H2O = L-tyrosyl-[protein] + phosphate. Functionally, mediates dephosphorylation of MAPK substrates such as SLT2, acquiring enhanced catalytic activity under oxidative conditions. This is Dual-specificity protein phosphatase SDP1 (SDP1) from Saccharomyces cerevisiae (strain ATCC 204508 / S288c) (Baker's yeast).